We begin with the raw amino-acid sequence, 249 residues long: Vacuolar iron transporter homolog 3 (249 aa).

The disordered stretch occupies residues 1-32 (MAMQMNSVVHVSTSPSPSPATSPPPEGKQEHG). Residues 1–74 (MAMQMNSVVH…SGRAQWLRAA (74 aa)) are Cytoplasmic-facing. Positions 16–26 (SPSPATSPPPE) are enriched in pro residues. A helical membrane pass occupies residues 75–95 (VLGANDGLVSVASLMIGVGAV). The Vacuolar segment spans residues 96 to 102 (SESGRAM). A helical transmembrane segment spans residues 103 to 123 (LVSGVAGLVAGACSMAIGEFV). Topologically, residues 124 to 166 (SVYAQYDIEVAAARRRRRQRRRRCDGDGEEEGSGRLPSPFKAA) are cytoplasmic. A helical transmembrane segment spans residues 167-187 (AASALAFTVGALLPLLAGGFV). Residues 188–193 (RPWAPR) lie on the Vacuolar side of the membrane. The helical transmembrane segment at 194–214 (VAAVCAATSAALAGFGALGAA) threads the bilayer. Residues 215-226 (LGGASPARSAAR) are Cytoplasmic-facing. Residues 227-247 (VLLGGWAAMAACYGVLRLFAN) traverse the membrane as a helical segment. Topologically, residues 248–249 (LY) are vacuolar.

Belongs to the CCC1 family.

It is found in the vacuole membrane. It catalyses the reaction Fe(2+)(in) = Fe(2+)(out). In terms of biological role, probable vacuolar iron transporter that may be involved in the regulation of iron distribution throughout the plant. The sequence is that of Vacuolar iron transporter homolog 3 from Oryza sativa subsp. japonica (Rice).